The chain runs to 64 residues: Large ribosomal subunit protein eL24 (64 aa).

Zn(2+) contacts are provided by Cys-6, Cys-9, Cys-32, and Cys-36. The segment at 6–36 (CNFCGKSIEPGTGKKFVKKDGSVMFICSSKC) adopts a C4-type zinc-finger fold.

It belongs to the eukaryotic ribosomal protein eL24 family. As to quaternary structure, part of the 50S ribosomal subunit. Forms a cluster with proteins L3 and L14. Requires Zn(2+) as cofactor.

Binds to the 23S rRNA. In Methanococcus aeolicus (strain ATCC BAA-1280 / DSM 17508 / OCM 812 / Nankai-3), this protein is Large ribosomal subunit protein eL24.